Reading from the N-terminus, the 236-residue chain is SERTA domain-containing protein 1 (236 aa).

A disordered region spans residues 1–20 (MLSKGLKRKREEEEEKEPLA). An SERTA domain is found at 38-85 (PAVASSSLFDLSVLKLHHSLQQSEPDLRHLVLVVNTLRRIQASMAPAA). Positions 189–211 (PASEGLKPGPEDGPGKEEAPELD) are disordered. The segment covering 197-207 (GPEDGPGKEEA) has biased composition (basic and acidic residues).

Interacts with the PHD-bromodomain of TIF1, TRIM28/TIF1B and p300/CBP. Interacts with E2F1 and TFDP1; modulates transactivation activity of TFDP1/E2F complexes. Also interacts with CDK4. In terms of processing, polyubiquitinated, which promotes proteasomal degradation.

Acts at E2F-responsive promoters as coregulator to integrate signals provided by PHD- and/or bromodomain-containing transcription factors. Stimulates E2F1/TFDP1 transcriptional activity. Renders the activity of cyclin D1/CDK4 resistant to the inhibitory effects of CDKN2A/p16INK4A. The chain is SERTA domain-containing protein 1 (SERTAD1) from Homo sapiens (Human).